Consider the following 742-residue polypeptide: Feeding circuit activating peptides (742 aa).

The first 22 residues, 1-22 (MTFAASFRALLCVLFCAALVHC), serve as a signal peptide directing secretion. Positions 23–98 (KTRTKRYVPH…YGALADRDVD (76 aa)) are excised as a propeptide. A propeptide spans 117 to 131 (GSLDAIPQDTDASSD) (connecting peptide). 20 consecutive propeptides follow at residues 164-168 (GSGAE), 202-220 (RGTGGQMHASSPRVVPWGS), 236-253 (DTELVENRQTTGQQTEVN), 271-275 (SGEAG), 293-297 (ADDQG), 315-321 (FDNSAGE), 339-341 (AGD), 359-366 (FDNDISGQ), 384-388 (SDQDN), 406-410 (ADDDG), 428-432 (ADEDD), 450-454 (GDEDD), 472-476 (ADEDD), 494-498 (SDEDD), 516-520 (SDEDD), 538-542 (ADEDD), 560-564 (NSPGL), 582-592 (NNEYYSGAENE), 610-614 (DQPGE), and 647-742 (NSAD…AGQM).

In terms of tissue distribution, expressed in pleural, pedal, abdominal, buccal and cerebral ganglia.

It is found in the secreted. Initiates organized rhythmic motor output of feeding circuit. The polypeptide is Feeding circuit activating peptides (Aplysia californica (California sea hare)).